The following is a 683-amino-acid chain: Elongation factor G 1 (683 aa).

The 276-residue stretch at 3–278 folds into the tr-type G domain; sequence DKMRNIGIMA…AVVDFLPAPN (276 aa). Residues 12 to 19, 76 to 80, and 130 to 133 each bind GTP; these read AHIDAGKT, DTPGH, and NKMD.

Belongs to the TRAFAC class translation factor GTPase superfamily. Classic translation factor GTPase family. EF-G/EF-2 subfamily.

The protein localises to the cytoplasm. Functionally, catalyzes the GTP-dependent ribosomal translocation step during translation elongation. During this step, the ribosome changes from the pre-translocational (PRE) to the post-translocational (POST) state as the newly formed A-site-bound peptidyl-tRNA and P-site-bound deacylated tRNA move to the P and E sites, respectively. Catalyzes the coordinated movement of the two tRNA molecules, the mRNA and conformational changes in the ribosome. In Treponema denticola (strain ATCC 35405 / DSM 14222 / CIP 103919 / JCM 8153 / KCTC 15104), this protein is Elongation factor G 1.